A 274-amino-acid chain; its full sequence is Chromatin modification-related protein YNG2 (274 aa).

The segment at 121–194 (EDEMESGPDF…ASTEREGTLD (74 aa)) is disordered. Basic and acidic residues predominate over residues 166–180 (THREKSYNKGDDTAD). Residues 215 to 264 (NLYCFCQRVSFGEMVACDGPNCKYEWFHYECVNLTEPPKGTWYCPDCKQE) form a PHD-type zinc finger. Zn(2+)-binding residues include C218, C220, C231, C236, H242, C245, C258, and C261.

It belongs to the ING family. In terms of assembly, interacts with H3K4me3 and to a lesser extent with H3K4me2. Component of the NuA4 histone acetyltransferase complex.

The protein localises to the nucleus. Its function is as follows. Component of the NuA4 histone acetyltransferase complex which is involved in transcriptional activation of selected genes principally by acetylation of nucleosomal histone H4 and H2A. The NuA4 complex is also involved in DNA repair. Involved in cell cycle progression and meiosis. The protein is Chromatin modification-related protein YNG2 (YNG2) of Candida glabrata (strain ATCC 2001 / BCRC 20586 / JCM 3761 / NBRC 0622 / NRRL Y-65 / CBS 138) (Yeast).